The following is an 80-amino-acid chain: Conotoxin Lt6.2 (80 aa).

An N-terminal signal peptide occupies residues 1–24 (MKLTRVLIIAVLFLTAYQLTTVET). Residues 25–47 (YSRGKWMHRALRSTGKNPKVTRE) constitute a propeptide that is removed on maturation. 3 disulfide bridges follow: Cys-48–Cys-62, Cys-55–Cys-66, and Cys-61–Cys-73.

The protein belongs to the conotoxin O1 superfamily. Expressed by the venom duct.

The protein localises to the secreted. This chain is Conotoxin Lt6.2, found in Conus litteratus (Lettered cone).